Reading from the N-terminus, the 351-residue chain is Protein RecA (351 aa).

Residue 73 to 80 participates in ATP binding; it reads GPESSGKT.

Belongs to the RecA family.

The protein localises to the cytoplasm. Its function is as follows. Can catalyze the hydrolysis of ATP in the presence of single-stranded DNA, the ATP-dependent uptake of single-stranded DNA by duplex DNA, and the ATP-dependent hybridization of homologous single-stranded DNAs. It interacts with LexA causing its activation and leading to its autocatalytic cleavage. The protein is Protein RecA of Oleidesulfovibrio alaskensis (strain ATCC BAA-1058 / DSM 17464 / G20) (Desulfovibrio alaskensis).